The chain runs to 264 residues: 3-methyl-2-oxobutanoate hydroxymethyltransferase (264 aa).

Mg(2+) contacts are provided by Asp-45 and Asp-84. 3-methyl-2-oxobutanoate is bound by residues 45–46 (DS), Asp-84, and Lys-112. A Mg(2+)-binding site is contributed by Glu-114. The Proton acceptor role is filled by Glu-181.

The protein belongs to the PanB family. As to quaternary structure, homodecamer; pentamer of dimers. Mg(2+) is required as a cofactor.

The protein localises to the cytoplasm. It carries out the reaction 3-methyl-2-oxobutanoate + (6R)-5,10-methylene-5,6,7,8-tetrahydrofolate + H2O = 2-dehydropantoate + (6S)-5,6,7,8-tetrahydrofolate. It functions in the pathway cofactor biosynthesis; (R)-pantothenate biosynthesis; (R)-pantoate from 3-methyl-2-oxobutanoate: step 1/2. In terms of biological role, catalyzes the reversible reaction in which hydroxymethyl group from 5,10-methylenetetrahydrofolate is transferred onto alpha-ketoisovalerate to form ketopantoate. In Escherichia coli (strain K12 / MC4100 / BW2952), this protein is 3-methyl-2-oxobutanoate hydroxymethyltransferase.